The primary structure comprises 1053 residues: Protein CLEC16A (1053 aa).

Positions 51 to 198 (IRSITEILIW…AVRTITLNVY (148 aa)) constitute an FPL domain. Disordered regions lie at residues 375–434 (SLEM…GESE), 452–471 (STSVQEQNTTDEEKSAAATC), and 892–983 (SSPS…SPSL). Basic residues predominate over residues 381 to 392 (HKGKRRVQKRPN). Positions 892–938 (SSPSLSSQSPPSASGSPSGSGSTSHCDSGGTSSSSTPSTAQSPADAP) are enriched in low complexity.

It belongs to the CLEC16A/gop-1 family. Interacts with RNF41/NRDP1. Almost exclusively expressed in immune cells, including dendritic cells, B-lymphocytes and natural killer cells.

It is found in the endosome membrane. It localises to the lysosome membrane. Its function is as follows. Regulator of mitophagy through the upstream regulation of the RNF41/NRDP1-PRKN pathway. Mitophagy is a selective form of autophagy necessary for mitochondrial quality control. The RNF41/NRDP1-PRKN pathway regulates autophagosome-lysosome fusion during late mitophagy. May protect RNF41/NRDP1 from proteasomal degradation, RNF41/NRDP1 which regulates proteasomal degradation of PRKN. Plays a key role in beta cells functions by regulating mitophagy/autophagy and mitochondrial health. The chain is Protein CLEC16A from Homo sapiens (Human).